The following is a 328-amino-acid chain: MSAAALLAPAPAPAGAPPAPEYYPEEDEELESAEDDERSCRGRESDEDTEDASETDLAKHDEEDFVEMKEQMYQDKLASLKRQLQQLQEGTLQEYQKRMKKLDQQYKERIRNAELFLQLETEQVERNYIKEKKAAVKEFEDKKVELKENLIAELEEKKKMIENEKLTMELTGDSMEVKPIMTRKLRRRPNDPVPIPDKRRKPAPAQLNYLLTDEQIMEDLRTLNKLKSPKRPASPSSPEHLPTTPAESPAQRFEARIEDGKLYYDKRWYHKSQAIYLESKDNQKLSCVISSVGANEIWVRKTSDSTKMRIYLGQLQRGLFVIRRRSAA.

The tract at residues 1 to 64 (MSAAALLAPA…TDLAKHDEED (64 aa)) is disordered. Ser-2 carries the post-translational modification N-acetylserine. A mediates interaction with USP17L2 region spans residues 2-170 (SAAALLAPAP…IENEKLTMEL (169 aa)). Residues 10-21 (APAPAGAPPAPE) show a composition bias toward pro residues. 2 stretches are compositionally biased toward acidic residues: residues 23-37 (YPEEDEELESAEDDE) and 45-54 (SDEDTEDASE). Residues Ser-32 and Ser-45 each carry the phosphoserine modification. Thr-49 carries the phosphothreonine modification. A Phosphoserine modification is found at Ser-53. The stretch at 64 to 171 (DFVEMKEQMY…ENEKLTMELT (108 aa)) forms a coiled coil. Glycyl lysine isopeptide (Lys-Gly) (interchain with G-Cter in SUMO2) cross-links involve residues Lys-69, Lys-178, and Lys-201. The tract at residues 226-252 (LKSPKRPASPSSPEHLPTTPAESPAQR) is disordered. Phosphoserine is present on residues Ser-228, Ser-234, and Ser-237. Phosphothreonine is present on Thr-244.

The protein belongs to the SDS3 family. As to quaternary structure, homodimer. Component of the SIN3 histone deacetylase (HDAC) corepressor complex. Interacts with SIN3A. Interaction with SIN3B enhances the interaction between SIN3B and HDAC1 to form a complex. Interacts with HCFC1. Component of a mSin3A corepressor complex that contains SIN3A, SAP130, SUDS3/SAP45, ARID4B/SAP180, HDAC1 and HDAC2. Interacts with USP17L2; the interaction is direct. Interacts with FOXK2. In terms of processing, polyubiquitinated. 'Lys-63'-polyubiquitinated SUDS3 positively regulates histone deacetylation. Regulated through deubiquitination by USP17L2/USP17 that cleaves 'Lys-63'-linked ubiquitin chains.

The protein resides in the nucleus. Functionally, regulatory protein which represses transcription and augments histone deacetylase activity of HDAC1. May have a potential role in tumor suppressor pathways through regulation of apoptosis. May function in the assembly and/or enzymatic activity of the mSin3A corepressor complex or in mediating interactions between the complex and other regulatory complexes. This chain is Sin3 histone deacetylase corepressor complex component SDS3 (SUDS3), found in Bos taurus (Bovine).